Here is a 431-residue protein sequence, read N- to C-terminus: Glutamate-1-semialdehyde 2,1-aminomutase (431 aa).

An N6-(pyridoxal phosphate)lysine modification is found at lysine 270.

This sequence belongs to the class-III pyridoxal-phosphate-dependent aminotransferase family. HemL subfamily. Homodimer. Pyridoxal 5'-phosphate is required as a cofactor.

It is found in the cytoplasm. The enzyme catalyses (S)-4-amino-5-oxopentanoate = 5-aminolevulinate. It functions in the pathway porphyrin-containing compound metabolism; protoporphyrin-IX biosynthesis; 5-aminolevulinate from L-glutamyl-tRNA(Glu): step 2/2. The polypeptide is Glutamate-1-semialdehyde 2,1-aminomutase (Limosilactobacillus reuteri subsp. reuteri (strain JCM 1112) (Lactobacillus reuteri)).